The primary structure comprises 247 residues: Neurotrophic factor BDNF precursor form (247 aa).

The first 18 residues, 1–18 (MTILFLTMVISYFGCMKA), serve as a signal peptide directing secretion. The propeptide occupies 19–128 (APMKEANIRG…AANMSMRVRR (110 aa)). Residue asparagine 121 is glycosylated (N-linked (GlcNAc...) asparagine). Intrachain disulfides connect cysteine 141–cysteine 208, cysteine 186–cysteine 237, and cysteine 196–cysteine 239.

It belongs to the NGF-beta family. In terms of assembly, monomers and homodimers. Binds to NTRK2/TRKB. Can form heterodimers with other neurotrophin family members, such as NTF3 and NTF4 (in vitro), but the physiological relevance of this is not clear. BDNF precursor form: interacts with the heterodimer formed by NGFR and SORCS2. In terms of processing, N-glycosylated and glycosulfated, contrary to mature BDNF. Mature BDNF is produced by proteolytic removal of the propeptide, catalyzed by a FURIN family member. In addition, the precursor form is proteolytically cleaved within the propeptide, but this is not an obligatory intermediate for the production of mature BDNF. Can be converted into mature BDNF by plasmin (PLG). In terms of tissue distribution, detected in blood plasma and in saliva (at protein level). Brain. Highly expressed in hippocampus, amygdala, cerebral cortex and cerebellum. Also expressed in heart, lung, skeletal muscle, testis, prostate and placenta.

Its subcellular location is the secreted. Its function is as follows. Important signaling molecule that activates signaling cascades downstream of NTRK2. During development, promotes the survival and differentiation of selected neuronal populations of the peripheral and central nervous systems. Participates in axonal growth, pathfinding and in the modulation of dendritic growth and morphology. Major regulator of synaptic transmission and plasticity at adult synapses in many regions of the CNS. The versatility of BDNF is emphasized by its contribution to a range of adaptive neuronal responses including long-term potentiation (LTP), long-term depression (LTD), certain forms of short-term synaptic plasticity, as well as homeostatic regulation of intrinsic neuronal excitability. Functionally, important signaling molecule that activates signaling cascades downstream of NTRK2. Activates signaling cascades via the heterodimeric receptor formed by NGFR and SORCS2. Signaling via NGFR and SORCS2 plays a role in synaptic plasticity and long-term depression (LTD). Binding to NGFR and SORCS2 promotes neuronal apoptosis. Promotes neuronal growth cone collapse. This is Neurotrophic factor BDNF precursor form from Homo sapiens (Human).